Here is a 339-residue protein sequence, read N- to C-terminus: Phenylalanine--tRNA ligase alpha subunit (339 aa).

Glutamate 262 is a binding site for Mg(2+).

The protein belongs to the class-II aminoacyl-tRNA synthetase family. Phe-tRNA synthetase alpha subunit type 1 subfamily. Tetramer of two alpha and two beta subunits. Mg(2+) is required as a cofactor.

The protein resides in the cytoplasm. The enzyme catalyses tRNA(Phe) + L-phenylalanine + ATP = L-phenylalanyl-tRNA(Phe) + AMP + diphosphate + H(+). The polypeptide is Phenylalanine--tRNA ligase alpha subunit (Neisseria gonorrhoeae (strain ATCC 700825 / FA 1090)).